Consider the following 115-residue polypeptide: Dolichyl-diphosphooligosaccharide--protein glycosyltransferase subunit DAD1 (115 aa).

Residues 1–31 are Cytoplasmic-facing; that stretch reads MVKSTSKDAQDLFRSLRSAYSATPTNLKIID. Residues 32 to 52 traverse the membrane as a helical segment; it reads LYVVFAVFTALIQVVYMALVG. The Lumenal segment spans residues 53-55; it reads SFP. A helical transmembrane segment spans residues 56-76; that stretch reads FNSFLSGVLSCIGTAVLAVCL. Topologically, residues 77-94 are cytoplasmic; sequence RIQVNKENKEFKDLAPER. A helical transmembrane segment spans residues 95–115; that stretch reads AFADFVLCNLVLHLVIINFLG.

It belongs to the DAD/OST2 family. As to quaternary structure, component of the oligosaccharyltransferase (OST) complex. In terms of tissue distribution, ubiquitous.

The protein resides in the endoplasmic reticulum membrane. The protein operates within protein modification; protein glycosylation. Its function is as follows. Subunit of the oligosaccharyl transferase (OST) complex that catalyzes the initial transfer of a defined glycan (Glc(3)Man(9)GlcNAc(2) in eukaryotes) from the lipid carrier dolichol-pyrophosphate to an asparagine residue within an Asn-X-Ser/Thr consensus motif in nascent polypeptide chains, the first step in protein N-glycosylation. N-glycosylation occurs cotranslationally and the complex associates with the Sec61 complex at the channel-forming translocon complex that mediates protein translocation across the endoplasmic reticulum (ER). All subunits are required for a maximal enzyme activity. The protein is Dolichyl-diphosphooligosaccharide--protein glycosyltransferase subunit DAD1 (DAD1) of Arabidopsis thaliana (Mouse-ear cress).